A 228-amino-acid chain; its full sequence is ATP phosphoribosyltransferase (228 aa).

Belongs to the ATP phosphoribosyltransferase family. Short subfamily. Heteromultimer composed of HisG and HisZ subunits.

It localises to the cytoplasm. It carries out the reaction 1-(5-phospho-beta-D-ribosyl)-ATP + diphosphate = 5-phospho-alpha-D-ribose 1-diphosphate + ATP. It functions in the pathway amino-acid biosynthesis; L-histidine biosynthesis; L-histidine from 5-phospho-alpha-D-ribose 1-diphosphate: step 1/9. Functionally, catalyzes the condensation of ATP and 5-phosphoribose 1-diphosphate to form N'-(5'-phosphoribosyl)-ATP (PR-ATP). Has a crucial role in the pathway because the rate of histidine biosynthesis seems to be controlled primarily by regulation of HisG enzymatic activity. The polypeptide is ATP phosphoribosyltransferase (Acinetobacter baylyi (strain ATCC 33305 / BD413 / ADP1)).